Reading from the N-terminus, the 3414-residue chain is Hemocyanin 1 (3414 aa).

A signal peptide spans 1-16 (MLSVRLLIVVLALANA). E17 contacts a divalent metal cation. Residues 17–437 (ENLVRKSVEH…PPVKHHQSAN (421 aa)) form a functional unit a (wall) region. H58 lines the Cu cation pocket. A disulfide bridge connects residues C64 and C73. Positions 74–76 (CIH) form a cross-link, 2'-(S-cysteinyl)-histidine (Cys-His). Cu cation is bound by residues H76, H85, H195, H199, and H226. A disulfide bridge connects residues C185 and C252. Positions 287-290 (CELH) form a cross-link, 2'-(S-cysteinyl)-histidine (Cys-His). An intrachain disulfide couples C339 to C351. N403 carries N-linked (GlcNAc...) asparagine glycosylation. Residues 438–851 (LLVRKNINDL…RVKFDKVPRS (414 aa)) are functional unit b (wall). Cu cation is bound at residue H478. An intrachain disulfide couples C484 to C495. Residues 496–498 (CVH) constitute a cross-link (2'-(S-cysteinyl)-histidine (Cys-His)). 2 residues coordinate Cu cation: H498 and H507. N-linked (GlcNAc...) asparagine glycosylation is present at N545. An intrachain disulfide couples C608 to C674. Positions 618, 622, and 649 each coordinate Cu cation. The stretch at 628–669 (SEHFSMSSLHYTAFDPLFYFHHSNVDRLWAVWQALQMRRHKP) is one WD 1 repeat. Position 737 (E737) interacts with a divalent metal cation. The interval 852–1271 (RLIRKNVDRL…EVYQAEVTSA (420 aa)) is functional unit c (wall). H892 lines the Cu cation pocket. A disulfide bridge connects residues C898 and C909. The segment at residues 910-912 (CVH) is a cross-link (2'-(S-cysteinyl)-histidine (Cys-His)). Cu cation contacts are provided by H912, H921, H1031, H1035, and H1062. Cystine bridges form between C1021/C1088 and C1178/C1184. Residues 1041 to 1082 (AQPYGMASLRYTAFDPLFYLHHSNTDRIWAIWQALQKYRGKP) form a WD 2 repeat. The segment at 1272–1680 (NRIRKNIENL…AHTDDGHTEP (409 aa)) is functional unit d (wall). H1309 is a Cu cation binding site. An intrachain disulfide couples C1315 to C1324. Positions 1325–1327 (CVH) form a cross-link, 2'-(S-cysteinyl)-histidine (Cys-His). Cu cation contacts are provided by H1327, H1336, H1440, H1444, and H1471. Disulfide bonds link C1430–C1497 and C1585–C1595. One copy of the WD 3 repeat lies at 1450–1491 (KGKYSMSNLDYAAFDPVFFLHHATTDRIWAIWQDLQRFRKRP). Residue N1648 is glycosylated (N-linked (GlcNAc...) asparagine). The functional unit e (wall) stretch occupies residues 1681 to 2097 (VMIRKDITQL…HDISSHHLSL (417 aa)). Residue H1721 participates in Cu cation binding. A disulfide bridge connects residues C1727 and C1738. A cross-link (2'-(S-cysteinyl)-histidine (Cys-His)) is located at residues 1739 to 1741 (CVH). Residues H1741, H1750, H1863, H1867, and H1894 each contribute to the Cu cation site. 2 cysteine pairs are disulfide-bonded: C1853–C1920 and C2009–C2015. The WD 4 repeat unit spans residues 1873 to 1914 (KEPYGIGHLHYASYDPLFYIHHSQTDRIWAIWQSLQRFRGLS). Residues 2098 to 2517 (NKVRHDLSTL…EDHHSSSMAG (420 aa)) form a functional unit f (wall) region. H2138 is a Cu cation binding site. Residues C2144 and C2154 are joined by a disulfide bond. Residue N2145 is glycosylated (N-linked (GlcNAc...) asparagine). The 2'-(S-cysteinyl)-histidine (Cys-His) cross-link spans 2155–2157 (CIH). Residues H2157, H2166, H2276, H2280, and H2307 each coordinate Cu cation. The WD 5 repeat unit spans residues 2163 to 2199 (PHWHRLYTLQFEQALRRHGSSVAVPYWDWTKPIHNIP). 2 disulfides stabilise this stretch: C2266–C2333 and C2420–C2426. E2424 is a binding site for a divalent metal cation. Positions 2518–2921 (HGVRKEINTL…EKHHEDHHED (404 aa)) are functional unit g (internal arc). Cu cation is bound at residue H2558. A disulfide bridge links C2564 with C2574. N-linked (GlcNAc...) asparagine glycosylation is present at N2571. A cross-link (2'-(S-cysteinyl)-histidine (Cys-His)) is located at residues 2575–2577 (CTH). Residues H2577, H2586, H2686, H2690, and H2717 each contribute to the Cu cation site. Intrachain disulfides connect C2676–C2743 and C2830–C2836. One copy of the WD 6 repeat lies at 2696–2737 (LTPYGMSTLEYTTYDPLFWLHHANTDRIWAIWQALQEYRGLP). Residues 2922–3414 (ILVRKNIHSL…LRIHVHVDDE (493 aa)) form a functional unit h (internal slab) region. H2962 contributes to the Cu cation binding site. Cysteines 2968 and 2978 form a disulfide. Positions 2979–2981 (CVH) form a cross-link, 2'-(S-cysteinyl)-histidine (Cys-His). Cu cation is bound by residues H2981, H2990, H3091, H3095, and H3122. C3081 and C3148 are disulfide-bonded. Residues 3101-3142 (AEKYSMSTLEYSAFDPYFMIHHASLDKIWIIWQELQKRRVKP) form a WD 7 repeat. N3278 is a glycosylation site (N-linked (GlcNAc...) asparagine). C3367 and C3400 are disulfide-bonded.

Belongs to the tyrosinase family. Hemocyanin subfamily. As to quaternary structure, homo-didecamer, with two decamers assembled face-to-face at their open ends. This didecamer form a stable 25 nM cylinder wall. In terms of processing, probably N-glycosylated. Asn-1280 and Asn-2484 are buried deeply in the protein which make them inaccessible for sugar attachment. Asn-3278 N-glycan is likely to represent a diantennate carbohydrate tree. The didecamer is almost evenly tagged by a total of 120 sugar trees. As to expression, hemolymph.

It is found in the secreted. It localises to the extracellular space. Its function is as follows. Hemocyanins are copper-containing oxygen carriers occurring freely dissolved in the hemolymph of many mollusks and arthropods. The chain is Hemocyanin 1 from Megathura crenulata (Giant keyhole limpet).